A 1357-amino-acid chain; its full sequence is DNA-directed RNA polymerase subunit beta (1357 aa).

Belongs to the RNA polymerase beta chain family. The RNAP catalytic core consists of 2 alpha, 1 beta, 1 beta' and 1 omega subunit. When a sigma factor is associated with the core the holoenzyme is formed, which can initiate transcription.

It carries out the reaction RNA(n) + a ribonucleoside 5'-triphosphate = RNA(n+1) + diphosphate. Its function is as follows. DNA-dependent RNA polymerase catalyzes the transcription of DNA into RNA using the four ribonucleoside triphosphates as substrates. This Pseudomonas fluorescens (strain SBW25) protein is DNA-directed RNA polymerase subunit beta.